The following is a 497-amino-acid chain: Vacuolar-processing enzyme beta-isozyme 1 (497 aa).

The N-terminal stretch at 1-23 (MAARCWVWGFVVALLAVAAAADG) is a signal peptide. Asn-153 is a glycosylation site (N-linked (GlcNAc...) asparagine). His-180 is an active-site residue. Catalysis depends on Cys-222, which acts as the Nucleophile. An intrachain disulfide couples Cys-255 to Cys-269. Asn-340 is a glycosylation site (N-linked (GlcNAc...) asparagine). Intrachain disulfides connect Cys-432–Cys-462 and Cys-444–Cys-479.

Belongs to the peptidase C13 family. Post-translationally, auto-catalytic activation. Expressed in developing seeds.

It localises to the protein storage vacuole. It carries out the reaction Hydrolysis of proteins and small molecule substrates at -Asn-|-Xaa- bonds.. Functionally, asparagine-specific endopeptidase that may be involved in processing of proteins targeted to vacuoles. Cysteine protease required for post-translational proteolysis of seed storage proteins in the protein storage vacuole (PSV) of developing seeds, by processing of proglutelin precursor to mature glutelin subunits, thus contributing to the formation of protein crystalline structures in PSV. The protein is Vacuolar-processing enzyme beta-isozyme 1 of Oryza sativa subsp. japonica (Rice).